A 354-amino-acid chain; its full sequence is Phospho-N-acetylmuramoyl-pentapeptide-transferase (354 aa).

The next 10 membrane-spanning stretches (helical) occupy residues 23–43 (FSFFIAFCLTVYLMPKFIAWA), 66–86 (TPTMGGLVFIGAAVFATLLCA), 88–108 (LDNVFVVASLLCLVGFSALGF), 130–150 (LAVQVLIGLVVSSLLYFHGEL), 161–181 (FALLDLGVFAIVFWTIVIVAA), 193–213 (GLASVPAIFSLLTLGVFAYIC), 230–250 (VGETVIIAAALIGSLMGFLWF), 257–277 (VFMGDSGSLSVGAYIGLMGVM), 282–302 (ILLIIIGFVFVMETLSVILQV), and 331–351 (KIIVRFWLIAILANLIALTAL).

This sequence belongs to the glycosyltransferase 4 family. MraY subfamily. Mg(2+) serves as cofactor.

The protein resides in the cell inner membrane. The enzyme catalyses UDP-N-acetyl-alpha-D-muramoyl-L-alanyl-gamma-D-glutamyl-meso-2,6-diaminopimeloyl-D-alanyl-D-alanine + di-trans,octa-cis-undecaprenyl phosphate = di-trans,octa-cis-undecaprenyl diphospho-N-acetyl-alpha-D-muramoyl-L-alanyl-D-glutamyl-meso-2,6-diaminopimeloyl-D-alanyl-D-alanine + UMP. The protein operates within cell wall biogenesis; peptidoglycan biosynthesis. Catalyzes the initial step of the lipid cycle reactions in the biosynthesis of the cell wall peptidoglycan: transfers peptidoglycan precursor phospho-MurNAc-pentapeptide from UDP-MurNAc-pentapeptide onto the lipid carrier undecaprenyl phosphate, yielding undecaprenyl-pyrophosphoryl-MurNAc-pentapeptide, known as lipid I. This Campylobacter curvus (strain 525.92) protein is Phospho-N-acetylmuramoyl-pentapeptide-transferase.